We begin with the raw amino-acid sequence, 92 residues long: N(2)-fixation sustaining protein CowN (92 aa).

It belongs to the CowN family.

Functionally, is required to sustain N(2)-dependent growth in the presence of low levels of carbon monoxide (CO). Probably acts by protecting the N(2) fixation ability of the nitrogenase complex, which is inactivated in the presence of CO. This is N(2)-fixation sustaining protein CowN from Rhodopseudomonas palustris (strain BisA53).